The following is a 1047-amino-acid chain: Probable sucrose-phosphate synthase 2 (1047 aa).

The segment covering 101–123 (EGKNAKREAKREREREKARREVT) has biased composition (basic and acidic residues). The interval 101 to 153 (EGKNAKREAKREREREKARREVTAEMSEDFSEGEKADLPGEIPTPSDNNTKGR) is disordered. Residues Ser127, Ser131, and Ser159 each carry the phosphoserine modification. Residues 712–731 (KSGSNNGVDTNLDAEDRAAE) form a disordered region.

Belongs to the glycosyltransferase 1 family. In terms of assembly, homodimer or homotetramer. Expressed in roots, cauline leaves, flower buds, flowers and anthers. Highly expressed in maturing nectaries.

The catalysed reaction is beta-D-fructose 6-phosphate + UDP-alpha-D-glucose = sucrose 6(F)-phosphate + UDP + H(+). Its pathway is glycan biosynthesis; sucrose biosynthesis; sucrose from D-fructose 6-phosphate and UDP-alpha-D-glucose: step 1/2. Activity is regulated by phosphorylation and moderated by concentration of metabolites and light. In terms of biological role, plays a role in photosynthetic sucrose synthesis by catalyzing the rate-limiting step of sucrose biosynthesis from UDP-glucose and fructose- 6-phosphate. Involved in the regulation of carbon partitioning in the leaves of plants. May regulate the synthesis of sucrose and therefore play a major role as a limiting factor in the export of photoassimilates out of the leaf. Plays a role for sucrose availability that is essential for plant growth and fiber elongation. Required for nectar secretion. The polypeptide is Probable sucrose-phosphate synthase 2 (SPS2) (Arabidopsis thaliana (Mouse-ear cress)).